The following is a 164-amino-acid chain: Pyruvoyl-dependent arginine decarboxylase (164 aa).

Residue serine 52 is modified to Pyruvic acid (Ser).

Belongs to the PdaD family. The cofactor is pyruvate.

The catalysed reaction is L-arginine + H(+) = agmatine + CO2. This is Pyruvoyl-dependent arginine decarboxylase from Methanococcus maripaludis (strain C7 / ATCC BAA-1331).